Here is a 511-residue protein sequence, read N- to C-terminus: MRVYVDGEPVDVPEEATVRDALEAAGVSVPEDVTIAVFKGEQKVERETDRLRIMLETGDEELSLTVAVEDERMSEVCEELPGASVSWTTRDEVGLGPVDVSDLEFHTRRGVEVPPYTAILILPTNDPSEAYFLITKRRMAVEYICTDIHGRVTAGRELVDELRGGERVTHVEPVVERATERVVSRVTLDDGLEAGDRIITRVEIELEKNAPVSAEHLLNTLEMEEGRLRIKFRTDTFTSIEPRPFYDLPEENVDMRERGVVTVRNRGVDEGVVYVYRRDRTPVESHNVVGRVRRGMELLDVVAEGDRVLVETDPPRVNFVGLTVDEARELAEEFDVELEVNGDGDVVVDQEPRETLNVLKERKVRVEVVPEDEVIEIELYEDDAPRSVEYFRRVTKMLDRPVGRLKVHFAYADLGMIVFEGNEKLGKKLPPENNPKDRVEAGVLGVTNQAKPHAGLIGVRLEDSEEYGPTGETFEGTNVIGRVVEGLGRLREMDQSDMGRTVYVREVRGER.

It belongs to the UPF0288 family.

The polypeptide is UPF0288 protein MK0796 (Methanopyrus kandleri (strain AV19 / DSM 6324 / JCM 9639 / NBRC 100938)).